Consider the following 462-residue polypeptide: Siroheme synthase (462 aa).

Residues 1–203 (MQYFPIFVDT…GNNSKAEQMM (203 aa)) form a precorrin-2 dehydrogenase /sirohydrochlorin ferrochelatase region. NAD(+) contacts are provided by residues 22-23 (EV) and 43-44 (PW). S128 carries the phosphoserine modification. The tract at residues 217–462 (GEVYLVGAGP…EKLNWFGADA (246 aa)) is uroporphyrinogen-III C-methyltransferase. P226 contributes to the S-adenosyl-L-methionine binding site. Residue D249 is the Proton acceptor of the active site. Catalysis depends on K271, which acts as the Proton donor. S-adenosyl-L-methionine-binding positions include 302-304 (GGD), I307, 332-333 (TA), M384, and A413.

It in the N-terminal section; belongs to the precorrin-2 dehydrogenase / sirohydrochlorin ferrochelatase family. In the C-terminal section; belongs to the precorrin methyltransferase family.

It carries out the reaction uroporphyrinogen III + 2 S-adenosyl-L-methionine = precorrin-2 + 2 S-adenosyl-L-homocysteine + H(+). The enzyme catalyses precorrin-2 + NAD(+) = sirohydrochlorin + NADH + 2 H(+). It catalyses the reaction siroheme + 2 H(+) = sirohydrochlorin + Fe(2+). The protein operates within cofactor biosynthesis; adenosylcobalamin biosynthesis; precorrin-2 from uroporphyrinogen III: step 1/1. Its pathway is cofactor biosynthesis; adenosylcobalamin biosynthesis; sirohydrochlorin from precorrin-2: step 1/1. It participates in porphyrin-containing compound metabolism; siroheme biosynthesis; precorrin-2 from uroporphyrinogen III: step 1/1. It functions in the pathway porphyrin-containing compound metabolism; siroheme biosynthesis; siroheme from sirohydrochlorin: step 1/1. The protein operates within porphyrin-containing compound metabolism; siroheme biosynthesis; sirohydrochlorin from precorrin-2: step 1/1. In terms of biological role, multifunctional enzyme that catalyzes the SAM-dependent methylations of uroporphyrinogen III at position C-2 and C-7 to form precorrin-2 via precorrin-1. Then it catalyzes the NAD-dependent ring dehydrogenation of precorrin-2 to yield sirohydrochlorin. Finally, it catalyzes the ferrochelation of sirohydrochlorin to yield siroheme. This is Siroheme synthase from Pseudoalteromonas atlantica (strain T6c / ATCC BAA-1087).